The chain runs to 347 residues: Dihydroorotase (347 aa).

His14 and His16 together coordinate Zn(2+). Substrate contacts are provided by residues 16–18 (HLR) and Asn42. 3 residues coordinate Zn(2+): Lys100, His137, and His175. Lys100 carries the N6-carboxylysine modification. His137 contributes to the substrate binding site. Leu220 lines the substrate pocket. Asp248 serves as a coordination point for Zn(2+). Asp248 is an active-site residue. Substrate-binding residues include His252 and Ala264.

This sequence belongs to the metallo-dependent hydrolases superfamily. DHOase family. Class II DHOase subfamily. Homodimer. It depends on Zn(2+) as a cofactor.

The enzyme catalyses (S)-dihydroorotate + H2O = N-carbamoyl-L-aspartate + H(+). It participates in pyrimidine metabolism; UMP biosynthesis via de novo pathway; (S)-dihydroorotate from bicarbonate: step 3/3. In terms of biological role, catalyzes the reversible cyclization of carbamoyl aspartate to dihydroorotate. This Pseudomonas syringae pv. tomato (strain ATCC BAA-871 / DC3000) protein is Dihydroorotase.